The primary structure comprises 729 residues: Leucine-rich repeat flightless-interacting protein 1 (729 aa).

Threonine 2 carries the post-translational modification N-acetylthreonine. Serine 16 carries the phosphoserine modification. Residues 40–65 (IRMKELERQQKEVEERPDKDFAEKGS) show a composition bias toward basic and acidic residues. A disordered region spans residues 40–98 (IRMKELERQQKEVEERPDKDFAEKGSRNMPSLSAATLASLGGTSSRRGSGDTSISMDTE). Positions 78–94 (SLGGTSSRRGSGDTSIS) are enriched in low complexity. Phosphoserine occurs at positions 83, 84, 88, 90, 92, and 97. The stretch at 94-194 (SMDTEASIRE…LRQREEMLEK (101 aa)) forms a coiled coil. Lysine 249 is covalently cross-linked (Glycyl lysine isopeptide (Lys-Gly) (interchain with G-Cter in SUMO1)). Positions 253-729 (VEKVGQRETL…SKSKEDCTMS (477 aa)) are disordered. A compositionally biased stretch (polar residues) spans 260-272 (ETLQNSEQEQPKP). A compositionally biased stretch (basic and acidic residues) spans 277 to 297 (DCVDRGVSHPGEKAENQRPAE). Serine 302 bears the Phosphoserine mark. The segment covering 313-326 (QQVQSQDQENTSDL) has biased composition (polar residues). Over residues 327-343 (KNSEQIESHKVTNKSDS) the composition is skewed to basic and acidic residues. Over residues 344–354 (RASNSPEQSSC) the composition is skewed to polar residues. A phosphoserine mark is found at serine 346 and serine 348. 2 stretches are compositionally biased toward basic and acidic residues: residues 435–445 (KGTENHGESCL) and 482–494 (KADDAEGRDEKPI). The segment at 465-567 (EEAIVQIPQA…KNKKKKAATP (103 aa)) is DNA-binding. Residues 506–523 (INQSGHQDTTGPGSTDAQ) are compositionally biased toward polar residues. Serine 538 and serine 547 each carry phosphoserine. The span at 550-564 (KKTKNKKKKNKKKKA) shows a compositional bias: basic residues. Basic and acidic residues predominate over residues 608–618 (QKIRAGSREPV). Phosphoserine occurs at positions 614 and 670. Polar residues-rich tracts occupy residues 667–684 (CDTSQIGSEEGHVTSQHG) and 693–710 (LDNSDLSGQLEGFNSESG). Residues 713–729 (AREEVGNSKSKEDCTMS) show a composition bias toward basic and acidic residues.

This sequence belongs to the LRRFIP family. Homodimer. May also form higher oligomers. Interacts with FLII. Interacts with MYD88. Competes with FLII for MyD88-binding, even in the absence of LPS. Ubiquitously expressed.

The protein localises to the nucleus. It localises to the cytoplasm. Functionally, transcriptional repressor which preferentially binds to the GC-rich consensus sequence (5'-AGCCCCCGGCG-3') and may regulate expression of TNF, EGFR and PDGFA. May control smooth muscle cells proliferation following artery injury through PDGFA repression. May also bind double-stranded RNA. Positively regulates Toll-like receptor (TLR) signaling in response to agonist probably by competing with the negative FLII regulator for MYD88-binding. In Mus musculus (Mouse), this protein is Leucine-rich repeat flightless-interacting protein 1 (Lrrfip1).